Consider the following 322-residue polypeptide: 4-hydroxy-3-methylbut-2-enyl diphosphate reductase (322 aa).

A [4Fe-4S] cluster-binding site is contributed by Cys-15. (2E)-4-hydroxy-3-methylbut-2-enyl diphosphate-binding residues include His-44 and His-77. Dimethylallyl diphosphate-binding residues include His-44 and His-77. Residues His-44 and His-77 each coordinate isopentenyl diphosphate. Residue Cys-99 participates in [4Fe-4S] cluster binding. A (2E)-4-hydroxy-3-methylbut-2-enyl diphosphate-binding site is contributed by His-127. His-127 serves as a coordination point for dimethylallyl diphosphate. His-127 contributes to the isopentenyl diphosphate binding site. Glu-129 functions as the Proton donor in the catalytic mechanism. Thr-168 is a binding site for (2E)-4-hydroxy-3-methylbut-2-enyl diphosphate. A [4Fe-4S] cluster-binding site is contributed by Cys-198. Residues Ser-226, Ser-227, Asn-228, and Ser-270 each contribute to the (2E)-4-hydroxy-3-methylbut-2-enyl diphosphate site. Residues Ser-226, Ser-227, Asn-228, and Ser-270 each contribute to the dimethylallyl diphosphate site. Residues Ser-226, Ser-227, Asn-228, and Ser-270 each contribute to the isopentenyl diphosphate site.

This sequence belongs to the IspH family. It depends on [4Fe-4S] cluster as a cofactor.

The catalysed reaction is isopentenyl diphosphate + 2 oxidized [2Fe-2S]-[ferredoxin] + H2O = (2E)-4-hydroxy-3-methylbut-2-enyl diphosphate + 2 reduced [2Fe-2S]-[ferredoxin] + 2 H(+). It catalyses the reaction dimethylallyl diphosphate + 2 oxidized [2Fe-2S]-[ferredoxin] + H2O = (2E)-4-hydroxy-3-methylbut-2-enyl diphosphate + 2 reduced [2Fe-2S]-[ferredoxin] + 2 H(+). It participates in isoprenoid biosynthesis; dimethylallyl diphosphate biosynthesis; dimethylallyl diphosphate from (2E)-4-hydroxy-3-methylbutenyl diphosphate: step 1/1. It functions in the pathway isoprenoid biosynthesis; isopentenyl diphosphate biosynthesis via DXP pathway; isopentenyl diphosphate from 1-deoxy-D-xylulose 5-phosphate: step 6/6. Catalyzes the conversion of 1-hydroxy-2-methyl-2-(E)-butenyl 4-diphosphate (HMBPP) into a mixture of isopentenyl diphosphate (IPP) and dimethylallyl diphosphate (DMAPP). Acts in the terminal step of the DOXP/MEP pathway for isoprenoid precursor biosynthesis. In Neisseria meningitidis serogroup A / serotype 4A (strain DSM 15465 / Z2491), this protein is 4-hydroxy-3-methylbut-2-enyl diphosphate reductase.